The primary structure comprises 213 residues: ATP phosphoribosyltransferase (213 aa).

Belongs to the ATP phosphoribosyltransferase family. Short subfamily. Heteromultimer composed of HisG and HisZ subunits.

It is found in the cytoplasm. The catalysed reaction is 1-(5-phospho-beta-D-ribosyl)-ATP + diphosphate = 5-phospho-alpha-D-ribose 1-diphosphate + ATP. Its pathway is amino-acid biosynthesis; L-histidine biosynthesis; L-histidine from 5-phospho-alpha-D-ribose 1-diphosphate: step 1/9. Its function is as follows. Catalyzes the condensation of ATP and 5-phosphoribose 1-diphosphate to form N'-(5'-phosphoribosyl)-ATP (PR-ATP). Has a crucial role in the pathway because the rate of histidine biosynthesis seems to be controlled primarily by regulation of HisG enzymatic activity. The sequence is that of ATP phosphoribosyltransferase from Listeria welshimeri serovar 6b (strain ATCC 35897 / DSM 20650 / CCUG 15529 / CIP 8149 / NCTC 11857 / SLCC 5334 / V8).